The chain runs to 102 residues: Iron-sulfur cluster assembly protein CyaY (102 aa).

The protein belongs to the frataxin family.

Its function is as follows. Involved in iron-sulfur (Fe-S) cluster assembly. May act as a regulator of Fe-S biogenesis. The chain is Iron-sulfur cluster assembly protein CyaY from Histophilus somni (strain 2336) (Haemophilus somnus).